The sequence spans 124 residues: Small ribosomal subunit protein uS11 (124 aa).

This sequence belongs to the universal ribosomal protein uS11 family. Part of the 30S ribosomal subunit. Interacts with proteins S7 and S18. Binds to IF-3.

Functionally, located on the platform of the 30S subunit, it bridges several disparate RNA helices of the 16S rRNA. Forms part of the Shine-Dalgarno cleft in the 70S ribosome. This Anaplasma marginale (strain St. Maries) protein is Small ribosomal subunit protein uS11.